The sequence spans 252 residues: Probable transcriptional regulatory protein Haur_3030 (252 aa).

Belongs to the TACO1 family.

The protein localises to the cytoplasm. The polypeptide is Probable transcriptional regulatory protein Haur_3030 (Herpetosiphon aurantiacus (strain ATCC 23779 / DSM 785 / 114-95)).